Consider the following 123-residue polypeptide: Small ribosomal subunit protein uS12 (123 aa).

Asp89 carries the post-translational modification 3-methylthioaspartic acid.

Belongs to the universal ribosomal protein uS12 family. Part of the 30S ribosomal subunit. Contacts proteins S8 and S17. May interact with IF1 in the 30S initiation complex.

Its function is as follows. With S4 and S5 plays an important role in translational accuracy. Functionally, interacts with and stabilizes bases of the 16S rRNA that are involved in tRNA selection in the A site and with the mRNA backbone. Located at the interface of the 30S and 50S subunits, it traverses the body of the 30S subunit contacting proteins on the other side and probably holding the rRNA structure together. The combined cluster of proteins S8, S12 and S17 appears to hold together the shoulder and platform of the 30S subunit. The polypeptide is Small ribosomal subunit protein uS12 (Syntrophobacter fumaroxidans (strain DSM 10017 / MPOB)).